The primary structure comprises 481 residues: Putative amino-acid transporter CPE0389 (481 aa).

Helical transmembrane passes span 7–27, 36–56, 87–107, 127–147, 156–176, 208–228, 241–261, 289–309, 338–358, 364–384, 401–421, 422–442, and 461–481; these read LGVI…GVYN, ASAG…WFIA, FLMA…YAVL, LSIA…LAGV, IGTI…LFSF, STML…VVSG, FLGF…PLGV, VIMN…WTVM, FSLL…HFAG, MLSI…LYLF, RKYA…LIYA, AGIN…PVFI, and YFAI…FKFM.

The protein belongs to the amino acid-polyamine-organocation (APC) superfamily. Basic amino acid/polyamine antiporter (APA) (TC 2.A.3.2) family.

It localises to the cell membrane. Its function is as follows. Could be an amino acid transporter. This chain is Putative amino-acid transporter CPE0389, found in Clostridium perfringens (strain 13 / Type A).